Reading from the N-terminus, the 121-residue chain is Large ribosomal subunit protein bL20 (121 aa).

Belongs to the bacterial ribosomal protein bL20 family.

Binds directly to 23S ribosomal RNA and is necessary for the in vitro assembly process of the 50S ribosomal subunit. It is not involved in the protein synthesizing functions of that subunit. The sequence is that of Large ribosomal subunit protein bL20 from Polynucleobacter asymbioticus (strain DSM 18221 / CIP 109841 / QLW-P1DMWA-1) (Polynucleobacter necessarius subsp. asymbioticus).